Reading from the N-terminus, the 152-residue chain is UPF0266 membrane protein YobD (152 aa).

Transmembrane regions (helical) follow at residues 6–26, 45–65, and 67–87; these read LVLILFIAALLAYALYDQFIM, VDSVIFVGLVAILIYNNVTSH, and AQMTTWLLSALALMGFYIFWI.

The protein belongs to the UPF0266 family.

The protein localises to the cell inner membrane. This chain is UPF0266 membrane protein YobD, found in Salmonella agona (strain SL483).